The chain runs to 681 residues: Glycogen-binding subunit 76A (681 aa).

5 disordered regions span residues methionine 1–proline 20, leucine 53–proline 94, serine 232–leucine 251, phenylalanine 285–leucine 391, and glutamine 405–glutamine 435. The span at glutamate 59–proline 69 shows a compositional bias: acidic residues. A compositionally biased stretch (polar residues) spans asparagine 72–aspartate 91. 3 stretches are compositionally biased toward basic and acidic residues: residues glutamate 237–leucine 251, arginine 297–proline 308, and proline 321–glutamate 336. The segment covering threonine 353 to glutamate 364 has biased composition (polar residues). The span at arginine 365–glutamate 374 shows a compositional bias: basic and acidic residues. Positions alanine 525–glutamine 632 constitute a CBM21 domain. A Phosphothreonine modification is found at threonine 545. Phosphoserine occurs at positions 547 and 549.

The polypeptide is Glycogen-binding subunit 76A (Gbs-76A) (Drosophila melanogaster (Fruit fly)).